The sequence spans 809 residues: MSTPAESSDSKSKKDFSTAILERKKSPNRLVVDEAINDDNSVVSLHPATMEKLQLFRGDTILIKGKKRKDTVCIALADETCEEPKIRMNKVVRSNLRVRLGDVISVHQCPDVKYGKRVHILPVDDTVEGVTGNLFDAYLKPYFLEAYRPVRKGDLFLVRGGMRSVEFKVIETDPAEYCVVAPDTEIFCEGEPVKREDEERLDDVGYDDVGGVRKQMAQIRELVELPLRHPQLFKSIGVKPPKGILLYGPPGSGKTLIARAVANETGAFFFCINGPEIMSKLAGESESNLRKAFEEAEKNAPSIIFIDEIDSIAPKREKTNGEVERRIVSQLLTLMDGLKSRAHVIVMGATNRPNSIDPALRRFGRFDREIDIGVPDEIGRLEVLRIHTKNMKLAEDVDLERISKDTHGYVGADLAALCTEAALQCIREKMDVIDLEDDSIDAEILNSMAVTNEHFHTALGNSNPSALRETVVEVPNVSWNDIGGLENVKRELQETVQYPVEHPEKFEKFGMSPSKGVLFYGPPGCGKTLLAKAIANECQANFISVKGPELLTMWFGESEANVREIFDKARQSAPCVLFFDELDSIATQRGGGSGGDGGGAADRVLNQLLTEMDGMNAKKTVFIIGATNRPDIIDSALLRPGRLDQLIYIPLPDEDSRLNIFKAALRKSPIAKDVDIGALAKYTQGFSGADITEICQRACKYAIRENIEKDIEKEKRRSENPEAMEEDGVDEVSEIKAAHFEESMKYARRSVSDADIRKYQAFAQTLQQSRGFGSEFRFENSAGSGATTGVADPFATSAAAAGDDDDLYN.

Ser2 carries the N-acetylserine modification. At Ser41 the chain carries Phosphoserine. ADP contacts are provided by residues Gly210, 248 to 256 (GPPGSGKTL), and His387. 521 to 529 (GPPGCGKTL) serves as a coordination point for ATP. Residues 782-809 (AGSGATTGVADPFATSAAAAGDDDDLYN) are disordered. The span at 791–801 (ADPFATSAAAA) shows a compositional bias: low complexity.

The protein belongs to the AAA ATPase family. In terms of assembly, homohexamer. Interacts with SERK1, GRF6, KAPP and SYP31, but not with KNOLLE. Component of the SERK1 signaling complex, composed of KAPP, CDC48A, GRF6 or GRF7, SERK1, SERK2, SERK3/BAK1 and BRI1. Interacts with PUX1, PUX2, PUX3, PUX4, PUX5, PUX7 and PUX11 via its N-terminus. Phosphorylated on at least one threonine residue and on Ser-41 by SERK1.

Its subcellular location is the nucleus. It is found in the cytoplasm. The protein resides in the cytoskeleton. The protein localises to the phragmoplast. It localises to the cell membrane. In terms of biological role, probably functions in cell division and growth processes. Interacts with certain SNAREs as part of specialized membrane fusion events where vesicles from the same organelle fuse (homotypic fusion). The protein is Cell division control protein 48 homolog A (CDC48A) of Arabidopsis thaliana (Mouse-ear cress).